The chain runs to 233 residues: Orotidine 5'-phosphate decarboxylase (233 aa).

Residues Asp11, Lys33, 60–69 (DLKFHDIPNT), Thr120, Arg181, Gln190, Gly210, and Arg211 each bind substrate. Lys62 (proton donor) is an active-site residue.

It belongs to the OMP decarboxylase family. Type 1 subfamily. Homodimer.

The enzyme catalyses orotidine 5'-phosphate + H(+) = UMP + CO2. It participates in pyrimidine metabolism; UMP biosynthesis via de novo pathway; UMP from orotate: step 2/2. Catalyzes the decarboxylation of orotidine 5'-monophosphate (OMP) to uridine 5'-monophosphate (UMP). This chain is Orotidine 5'-phosphate decarboxylase, found in Vibrio parahaemolyticus serotype O3:K6 (strain RIMD 2210633).